The chain runs to 517 residues: Protein NETWORKED 4B (517 aa).

2 disordered regions span residues 1–29 (MASS…DSHN) and 101–159 (LQKN…EDGD). A compositionally biased stretch (basic residues) spans 10 to 21 (KQFKRSMTKKSH). The region spanning 21–101 (HSWWWDSHNC…ERYDQASGEL (81 aa)) is the NAB domain. A compositionally biased stretch (low complexity) spans 107 to 119 (SEIQSQSSLEISS). Residues 121-135 (TKEKLSRRQSSHKEE) are compositionally biased toward basic and acidic residues. Residues 156–486 (EDGDEALIRR…EQKREAIRQL (331 aa)) adopt a coiled-coil conformation.

Belongs to the NET family.

Functionally, plant-specific actin binding protein. May be part of a membrane-cytoskeletal adapter complex. In Arabidopsis thaliana (Mouse-ear cress), this protein is Protein NETWORKED 4B.